Here is a 349-residue protein sequence, read N- to C-terminus: DNA-directed RNA polymerase subunit alpha (349 aa).

The interval 1–226 (MLIAQRPTLI…GLFGLAQELN (226 aa)) is alpha N-terminal domain (alpha-NTD). The interval 241-349 (AALAADLALP…GAEFIETEQY (109 aa)) is alpha C-terminal domain (alpha-CTD). Positions 309 to 349 (KDSPPGFDPRQAVDTYGTDAYSPSFSDPSDDGAEFIETEQY) are disordered. Over residues 336 to 349 (PSDDGAEFIETEQY) the composition is skewed to acidic residues.

The protein belongs to the RNA polymerase alpha chain family. In terms of assembly, homodimer. The RNAP catalytic core consists of 2 alpha, 1 beta, 1 beta' and 1 omega subunit. When a sigma factor is associated with the core the holoenzyme is formed, which can initiate transcription.

It carries out the reaction RNA(n) + a ribonucleoside 5'-triphosphate = RNA(n+1) + diphosphate. DNA-dependent RNA polymerase catalyzes the transcription of DNA into RNA using the four ribonucleoside triphosphates as substrates. In Frankia casuarinae (strain DSM 45818 / CECT 9043 / HFP020203 / CcI3), this protein is DNA-directed RNA polymerase subunit alpha.